The following is a 150-amino-acid chain: Transcriptional repressor NrdR (150 aa).

The segment at 3 to 34 (CPFCHHPQSRVIDSRTVENGFVTRRRRQCTKC) is a zinc-finger region. Residues 46 to 136 (LLVEKRNGVT…VYKSFSSMED (91 aa)) enclose the ATP-cone domain.

It belongs to the NrdR family. It depends on Zn(2+) as a cofactor.

Functionally, negatively regulates transcription of bacterial ribonucleotide reductase nrd genes and operons by binding to NrdR-boxes. In Corynebacterium kroppenstedtii (strain DSM 44385 / JCM 11950 / CIP 105744 / CCUG 35717), this protein is Transcriptional repressor NrdR.